The chain runs to 142 residues: Semaphorin-like protein VACWR164 (142 aa).

The region spanning 1–142 is the Sema domain; it reads MNTIKQSFST…MPQMKKILKM (142 aa).

Belongs to the semaphorin family.

The sequence is that of Semaphorin-like protein VACWR164 from Bos taurus (Bovine).